Here is a 117-residue protein sequence, read N- to C-terminus: Ribosome-binding factor A (117 aa).

It belongs to the RbfA family. In terms of assembly, monomer. Binds 30S ribosomal subunits, but not 50S ribosomal subunits or 70S ribosomes.

It is found in the cytoplasm. Its function is as follows. One of several proteins that assist in the late maturation steps of the functional core of the 30S ribosomal subunit. Associates with free 30S ribosomal subunits (but not with 30S subunits that are part of 70S ribosomes or polysomes). Required for efficient processing of 16S rRNA. May interact with the 5'-terminal helix region of 16S rRNA. In Bacillus licheniformis (strain ATCC 14580 / DSM 13 / JCM 2505 / CCUG 7422 / NBRC 12200 / NCIMB 9375 / NCTC 10341 / NRRL NRS-1264 / Gibson 46), this protein is Ribosome-binding factor A.